Reading from the N-terminus, the 1024-residue chain is Error-prone DNA polymerase (1024 aa).

The protein belongs to the DNA polymerase type-C family. DnaE2 subfamily.

Its subcellular location is the cytoplasm. The enzyme catalyses DNA(n) + a 2'-deoxyribonucleoside 5'-triphosphate = DNA(n+1) + diphosphate. Its function is as follows. DNA polymerase involved in damage-induced mutagenesis and translesion synthesis (TLS). It is not the major replicative DNA polymerase. The sequence is that of Error-prone DNA polymerase from Vibrio campbellii (strain ATCC BAA-1116).